A 211-amino-acid chain; its full sequence is MANCVVRDWQGKETGKASLDLKVAKETTALDLMHRAVLRQQAHTRQGTASTLTRSEVRGGGRKPYKQKGTGRARQGSIRTPLRPGGGIVFGPKPRSYNLAMNRKERRLALRTALMARIDDVTVVKDFGTSLEAPKTREIVDALGRLGIEADSKVLIVLGTPSEVLRRSVRNLEKVKLIAANQLNVFDLLHANALVLGEEALATIQEVYGDD.

A disordered region spans residues 40–87; that stretch reads QQAHTRQGTASTLTRSEVRGGGRKPYKQKGTGRARQGSIRTPLRPGGG. Over residues 41 to 54 the composition is skewed to polar residues; sequence QAHTRQGTASTLTR. Basic residues predominate over residues 60 to 71; the sequence is GGRKPYKQKGTG.

Belongs to the universal ribosomal protein uL4 family. In terms of assembly, part of the 50S ribosomal subunit.

Functionally, one of the primary rRNA binding proteins, this protein initially binds near the 5'-end of the 23S rRNA. It is important during the early stages of 50S assembly. It makes multiple contacts with different domains of the 23S rRNA in the assembled 50S subunit and ribosome. In terms of biological role, forms part of the polypeptide exit tunnel. This chain is Large ribosomal subunit protein uL4, found in Synechococcus sp. (strain WH7803).